A 433-amino-acid chain; its full sequence is Ribosome biogenesis protein WDR12 homolog (433 aa).

The ubiquitin-like (UBL) domain stretch occupies residues 21–102 (VEVFVVSYRH…ESVISIECIV (82 aa)). WD repeat units follow at residues 114-151 (ALLD…LTSS), 153-194 (LHEE…SSTF), 203-242 (GHER…TSTV), 270-310 (GHKD…QINT), 312-351 (AAKK…GTLV), 357-397 (GHCG…TPLY), and 401-433 (GHSD…RRKM).

The protein belongs to the WD repeat WDR12/YTM1 family.

The protein localises to the nucleus. Its subcellular location is the nucleolus. It localises to the nucleoplasm. In terms of biological role, required for maturation of ribosomal RNAs and formation of the large ribosomal subunit. The chain is Ribosome biogenesis protein WDR12 homolog from Brugia malayi (Filarial nematode worm).